The following is a 249-amino-acid chain: Leucyl/phenylalanyl-tRNA--protein transferase (249 aa).

Residues 1-21 (MSRTLPHLLSPDPASPFPPAE) are disordered.

This sequence belongs to the L/F-transferase family.

It is found in the cytoplasm. It catalyses the reaction N-terminal L-lysyl-[protein] + L-leucyl-tRNA(Leu) = N-terminal L-leucyl-L-lysyl-[protein] + tRNA(Leu) + H(+). The catalysed reaction is N-terminal L-arginyl-[protein] + L-leucyl-tRNA(Leu) = N-terminal L-leucyl-L-arginyl-[protein] + tRNA(Leu) + H(+). It carries out the reaction L-phenylalanyl-tRNA(Phe) + an N-terminal L-alpha-aminoacyl-[protein] = an N-terminal L-phenylalanyl-L-alpha-aminoacyl-[protein] + tRNA(Phe). In terms of biological role, functions in the N-end rule pathway of protein degradation where it conjugates Leu, Phe and, less efficiently, Met from aminoacyl-tRNAs to the N-termini of proteins containing an N-terminal arginine or lysine. In Xanthomonas campestris pv. campestris (strain B100), this protein is Leucyl/phenylalanyl-tRNA--protein transferase.